We begin with the raw amino-acid sequence, 22 residues long: Polydim-I (22 aa).

As to expression, expressed by the venom gland.

Its subcellular location is the secreted. Antibacterial peptide. Acts on the Mycobacterium abscessus subsp. massiliense cell wall. Reduces 40-50% of the bacterial load in macrophages infected with different M.abscessus strains. Is not cytotoxic towards mammalian cells, and shows no hemolytic activity against human erythrocytes. In vivo, reduces the bacterial load in the lungs, spleen, and liver of highly susceptible mice intravenously infected with M.abscessus. This chain is Polydim-I, found in Polybia dimorpha (Neotropical wasp).